We begin with the raw amino-acid sequence, 763 residues long: Eukaryotic translation initiation factor 3 subunit B (763 aa).

The interval 1-136 (MKNFLPRTLK…LFVECGSMND (136 aa)) is sufficient for interaction with HCR1 and TIF32. The tract at residues 28–261 (RNTQLKRSKI…GVTAWGGPNF (234 aa)) is sufficient for interaction with PIC8. At Ser-61 the chain carries Phosphoserine. Tyr-67 is modified (phosphotyrosine). The 86-residue stretch at 77-162 (QYIVVNGAPV…HRLFLYTMKD (86 aa)) folds into the RRM domain. WD repeat units follow at residues 228-266 (RENWSTNYVRFSPKGTYLFSYHQQGVTAWGGPNFDRLRR), 277-325 (VSPN…LMAT), 373-416 (LKPS…SACT), 484-524 (ELKD…IRFY), 544-589 (IPKT…EKNI), and 605-650 (PTYS…VKED). Ser-669 is modified (phosphoserine).

It belongs to the eIF-3 subunit B family. The eukaryotic translation initiation factor 3 (eIF-3) core complex is composed of TIF32, PRT1, NIP1, TIF34 and TIF35. A subcomplex of TIF32, NIP1 and PRT1 mediates the interaction with eIF-1, TIF5/eIF-5 and HCR1. The factors eIF-1, eIF-2, eIF-3, TIF5/eIF-5 and methionyl-tRNAi form a multifactor complex (MFC) that may bind to the 40S ribosome.

It localises to the cytoplasm. In terms of biological role, RNA-binding component of the eukaryotic translation initiation factor 3 (eIF-3) complex, which is involved in protein synthesis of a specialized repertoire of mRNAs and, together with other initiation factors, stimulates binding of mRNA and methionyl-tRNAi to the 40S ribosome. The eIF-3 complex specifically targets and initiates translation of a subset of mRNAs involved in cell proliferation. This Saccharomyces cerevisiae (strain ATCC 204508 / S288c) (Baker's yeast) protein is Eukaryotic translation initiation factor 3 subunit B.